The sequence spans 626 residues: MNFRNLAIWLVIVAVLGGVFVVSQNSRTKSSSEISYSQLLKDVDAGKIKSAEIAGQTVLAKTADNKTLTVNAPMNSEELVNRMVAKNADVKFKSGSISFLAILVQLLPILLVVGVWLFLMRQMQGGAKGAMGFGKSKARLLTENKNRITFEDVAGVDEAKEELQEVVDFLKDPAKFQRLGGKIPKGALLVGPPGTGKTLIARAVAGEAGVPFFTISGSDFVEMFVGVGASRVRDMFEQAKKNAPCIIFIDEIDAVGRHRGAGLGGGNDEREQTLNQLLVEMDGFEANEGIILIAATNRPDVLDPALLRPGRFDRQVVVPNPDVAGREKIIRVHMKNVPLAADVDVKTLARGTPGFSGADLANLVNEAALMAARKNRRMVTMQDFEQAKDKVMMGAERRSMAMNEEEKKLTAYHEGGHAIVALNVPLADPVHKATIVPRGRALGMVMQLPEGDRYSMKYQQMTSRLAIMMGGRVAEEIIFGKENITSGASSDIKAATDLARNMVTRWGYSDILGTVAYGDNQDEVFLGHSVARTQNVSEETARLIDSEVKRLVQYGLDEARRILTDKIDDLHTLGKALLEYETLSGEEIADILKGIPPKREEEEAATAVIAPSLVPLSPGAGASVTA.

Topologically, residues 1-5 (MNFRN) are cytoplasmic. The helical transmembrane segment at 6 to 26 (LAIWLVIVAVLGGVFVVSQNS) threads the bilayer. Residues 27-98 (RTKSSSEISY…DVKFKSGSIS (72 aa)) lie on the Periplasmic side of the membrane. A helical membrane pass occupies residues 99 to 119 (FLAILVQLLPILLVVGVWLFL). Residues 120-626 (MRQMQGGAKG…SPGAGASVTA (507 aa)) are Cytoplasmic-facing. ATP is bound at residue 191–198 (GPPGTGKT). His-413 serves as a coordination point for Zn(2+). Glu-414 is an active-site residue. The Zn(2+) site is built by His-417 and Asp-491.

It in the central section; belongs to the AAA ATPase family. This sequence in the C-terminal section; belongs to the peptidase M41 family. In terms of assembly, homohexamer. Zn(2+) is required as a cofactor.

The protein localises to the cell inner membrane. In terms of biological role, acts as a processive, ATP-dependent zinc metallopeptidase for both cytoplasmic and membrane proteins. Plays a role in the quality control of integral membrane proteins. Its function is as follows. Absence of FtsH leads to increased sigma-32 levels, which suggests, in analogy to E.coli, that sigma-32 is a substrate for FtsH. May play a role in the general stress response, as overexpression leads to improved resistance to salt stress. In Caulobacter vibrioides (strain NA1000 / CB15N) (Caulobacter crescentus), this protein is ATP-dependent zinc metalloprotease FtsH.